The following is an 827-amino-acid chain: Beta-galactosidase 2 (827 aa).

The N-terminal stretch at 1 to 24 (MAASAVAVAFVVAVAAVLAAAASA) is a signal peptide. Glu-182 acts as the Proton donor in catalysis. Residue Asn-209 is glycosylated (N-linked (GlcNAc...) asparagine). The Nucleophile role is filled by Glu-251. The N-linked (GlcNAc...) asparagine glycan is linked to Asn-458. The SUEL-type lectin domain occupies 741-827 (DYEKAKVHLQ…KRAVVEAICG (87 aa)).

This sequence belongs to the glycosyl hydrolase 35 family.

The protein resides in the secreted. It is found in the extracellular space. The protein localises to the apoplast. It carries out the reaction Hydrolysis of terminal non-reducing beta-D-galactose residues in beta-D-galactosides.. The polypeptide is Beta-galactosidase 2 (Oryza sativa subsp. japonica (Rice)).